The chain runs to 227 residues: Cytochrome c oxidase subunit 2 (227 aa).

Residues 1-14 lie on the Mitochondrial intermembrane side of the membrane; sequence MAYPVQLGFQDAAS. Residues 15-45 form a helical membrane-spanning segment; the sequence is PIMEELLYFHDHTLMIMFLISSLVLYIISLM. Residues 46 to 59 are Mitochondrial matrix-facing; the sequence is LTTELIHTSTMDAQ. The helical transmembrane segment at 60-87 threads the bilayer; that stretch reads EVETVWTILPAVILILIALPSLRILYMM. Over 88–227 the chain is Mitochondrial intermembrane; it reads DEISTPSLTL…HFEEWLLSML (140 aa). Histidine 161, cysteine 196, glutamate 198, cysteine 200, histidine 204, and methionine 207 together coordinate Cu cation. Glutamate 198 is a binding site for Mg(2+).

Belongs to the cytochrome c oxidase subunit 2 family. As to quaternary structure, component of the cytochrome c oxidase (complex IV, CIV), a multisubunit enzyme composed of 14 subunits. The complex is composed of a catalytic core of 3 subunits MT-CO1, MT-CO2 and MT-CO3, encoded in the mitochondrial DNA, and 11 supernumerary subunits COX4I, COX5A, COX5B, COX6A, COX6B, COX6C, COX7A, COX7B, COX7C, COX8 and NDUFA4, which are encoded in the nuclear genome. The complex exists as a monomer or a dimer and forms supercomplexes (SCs) in the inner mitochondrial membrane with NADH-ubiquinone oxidoreductase (complex I, CI) and ubiquinol-cytochrome c oxidoreductase (cytochrome b-c1 complex, complex III, CIII), resulting in different assemblies (supercomplex SCI(1)III(2)IV(1) and megacomplex MCI(2)III(2)IV(2)). Found in a complex with TMEM177, COA6, COX18, COX20, SCO1 and SCO2. Interacts with TMEM177 in a COX20-dependent manner. Interacts with COX20. Interacts with COX16. The cofactor is Cu cation.

The protein resides in the mitochondrion inner membrane. The enzyme catalyses 4 Fe(II)-[cytochrome c] + O2 + 8 H(+)(in) = 4 Fe(III)-[cytochrome c] + 2 H2O + 4 H(+)(out). In terms of biological role, component of the cytochrome c oxidase, the last enzyme in the mitochondrial electron transport chain which drives oxidative phosphorylation. The respiratory chain contains 3 multisubunit complexes succinate dehydrogenase (complex II, CII), ubiquinol-cytochrome c oxidoreductase (cytochrome b-c1 complex, complex III, CIII) and cytochrome c oxidase (complex IV, CIV), that cooperate to transfer electrons derived from NADH and succinate to molecular oxygen, creating an electrochemical gradient over the inner membrane that drives transmembrane transport and the ATP synthase. Cytochrome c oxidase is the component of the respiratory chain that catalyzes the reduction of oxygen to water. Electrons originating from reduced cytochrome c in the intermembrane space (IMS) are transferred via the dinuclear copper A center (CU(A)) of subunit 2 and heme A of subunit 1 to the active site in subunit 1, a binuclear center (BNC) formed by heme A3 and copper B (CU(B)). The BNC reduces molecular oxygen to 2 water molecules using 4 electrons from cytochrome c in the IMS and 4 protons from the mitochondrial matrix. This is Cytochrome c oxidase subunit 2 (MT-CO2) from Eulemur macaco (Black lemur).